A 385-amino-acid polypeptide reads, in one-letter code: S-adenosylmethionine synthase (385 aa).

ATP is bound at residue His14. Asp16 is a binding site for Mg(2+). K(+) is bound at residue Glu42. L-methionine-binding residues include Glu55 and Gln98. The segment at 98–108 (QSGDIAQAVDN) is flexible loop. ATP is bound by residues 165–167 (DAK), 232–233 (RF), Asp241, 247–248 (RK), Ala264, and Lys268. L-methionine is bound at residue Asp241. Lys272 provides a ligand contact to L-methionine.

This sequence belongs to the AdoMet synthase family. In terms of assembly, homotetramer; dimer of dimers. The cofactor is Mg(2+). K(+) serves as cofactor.

It is found in the cytoplasm. The catalysed reaction is L-methionine + ATP + H2O = S-adenosyl-L-methionine + phosphate + diphosphate. Its pathway is amino-acid biosynthesis; S-adenosyl-L-methionine biosynthesis; S-adenosyl-L-methionine from L-methionine: step 1/1. Catalyzes the formation of S-adenosylmethionine (AdoMet) from methionine and ATP. The overall synthetic reaction is composed of two sequential steps, AdoMet formation and the subsequent tripolyphosphate hydrolysis which occurs prior to release of AdoMet from the enzyme. This is S-adenosylmethionine synthase from Leuconostoc mesenteroides subsp. mesenteroides (strain ATCC 8293 / DSM 20343 / BCRC 11652 / CCM 1803 / JCM 6124 / NCDO 523 / NBRC 100496 / NCIMB 8023 / NCTC 12954 / NRRL B-1118 / 37Y).